We begin with the raw amino-acid sequence, 131 residues long: Profilin-2 (131 aa).

It belongs to the profilin family. In terms of assembly, occurs in many kinds of cells as a complex with monomeric actin in a 1:1 ratio. Expressed in vascular bundles of roots, hypocotyls, cotyledons, leaves, sepals, petals, stamen filaments and stalks of developing seeds. Expressed in leaf epidermal cells, trichomes and stem epidermal cells. Detected in phloem exudates (at protein level).

It is found in the cytoplasm. It localises to the cytoskeleton. Its subcellular location is the endoplasmic reticulum. The protein resides in the cytosol. The protein localises to the nucleus. In terms of biological role, binds to actin monomers and regulates the organization of the actin cytoskeleton. At high concentrations, profilin prevents the polymerization of actin, whereas it enhances it at low concentrations. At low concentrations, associates with the poly-proline motif of formins to enhance actin filament elongation rate. Binds G-actin and poly-L-proline with low affinity in vitro. Binds ACT1, ACT7 and ACT11 and inhibits actin polymerization. May be involved in the cross-talk between vesicular trafficking and the actin cytoskeleton. Inhibits cell growth of various pathogenic fungal strains. May play a role as antifungal proteins in the defense system against fungal pathogen attacks. This is Profilin-2 from Arabidopsis thaliana (Mouse-ear cress).